A 278-amino-acid polypeptide reads, in one-letter code: Pantothenate synthetase (278 aa).

Position 26–33 (26–33 (MGNLHEGH)) interacts with ATP. The active-site Proton donor is H33. A (R)-pantoate-binding site is contributed by Q57. Q57 is a binding site for beta-alanine. 144–147 (GKKD) contributes to the ATP binding site. (R)-pantoate is bound at residue Q150. ATP-binding positions include G173 and 181–184 (LSSR).

Belongs to the pantothenate synthetase family. As to quaternary structure, homodimer.

Its subcellular location is the cytoplasm. It catalyses the reaction (R)-pantoate + beta-alanine + ATP = (R)-pantothenate + AMP + diphosphate + H(+). It functions in the pathway cofactor biosynthesis; (R)-pantothenate biosynthesis; (R)-pantothenate from (R)-pantoate and beta-alanine: step 1/1. Catalyzes the condensation of pantoate with beta-alanine in an ATP-dependent reaction via a pantoyl-adenylate intermediate. In Neisseria meningitidis serogroup A / serotype 4A (strain DSM 15465 / Z2491), this protein is Pantothenate synthetase.